The sequence spans 333 residues: L-lactate dehydrogenase B chain (333 aa).

NAD(+)-binding positions include 29–57 (GQVG…LEDK) and R99. Residues R106, N138, and R169 each contribute to the substrate site. Residue N138 coordinates NAD(+). The Proton acceptor role is filled by H193. T248 lines the substrate pocket.

Belongs to the LDH/MDH superfamily. LDH family. In terms of assembly, homotetramer.

The protein localises to the cytoplasm. It carries out the reaction (S)-lactate + NAD(+) = pyruvate + NADH + H(+). Its pathway is fermentation; pyruvate fermentation to lactate; (S)-lactate from pyruvate: step 1/1. Interconverts simultaneously and stereospecifically pyruvate and lactate with concomitant interconversion of NADH and NAD(+). The polypeptide is L-lactate dehydrogenase B chain (LDHB) (Pelodiscus sinensis japonicus (Chinese soft-shelled turtle)).